The chain runs to 149 residues: UPF0310 protein SSO2595 (149 aa).

This sequence belongs to the UPF0310 family.

This Saccharolobus solfataricus (strain ATCC 35092 / DSM 1617 / JCM 11322 / P2) (Sulfolobus solfataricus) protein is UPF0310 protein SSO2595.